The sequence spans 120 residues: Aspartate 1-decarboxylase (120 aa).

The active-site Schiff-base intermediate with substrate; via pyruvic acid is the Ser-25. At Ser-25 the chain carries Pyruvic acid (Ser). Thr-57 provides a ligand contact to substrate. Tyr-58 serves as the catalytic Proton donor. 73–75 serves as a coordination point for substrate; sequence GAA.

This sequence belongs to the PanD family. In terms of assembly, heterooctamer of four alpha and four beta subunits. The cofactor is pyruvate. Post-translationally, is synthesized initially as an inactive proenzyme, which is activated by self-cleavage at a specific serine bond to produce a beta-subunit with a hydroxyl group at its C-terminus and an alpha-subunit with a pyruvoyl group at its N-terminus.

The protein localises to the cytoplasm. The enzyme catalyses L-aspartate + H(+) = beta-alanine + CO2. Its pathway is cofactor biosynthesis; (R)-pantothenate biosynthesis; beta-alanine from L-aspartate: step 1/1. Its function is as follows. Catalyzes the pyruvoyl-dependent decarboxylation of aspartate to produce beta-alanine. This Methylibium petroleiphilum (strain ATCC BAA-1232 / LMG 22953 / PM1) protein is Aspartate 1-decarboxylase.